We begin with the raw amino-acid sequence, 512 residues long: Aldehyde dehydrogenase B (512 aa).

Residues Glu268 and Cys307 contribute to the active site.

In terms of assembly, homotetramer.

The enzyme catalyses an aldehyde + NADP(+) + H2O = a carboxylate + NADPH + 2 H(+). The catalysed reaction is acetaldehyde + NADP(+) + H2O = acetate + NADPH + 2 H(+). It catalyses the reaction chloroacetaldehyde + NADP(+) + H2O = chloroacetate + NADPH + 2 H(+). It carries out the reaction propanal + NADP(+) + H2O = propanoate + NADPH + 2 H(+). Magnesium increases enzyme activity with various substrates. Functionally, catalyzes the NADP(+)-dependent oxidation of diverse aldehydes to their corresponding carboxylic acids, with a preference for acetaldehyde and chloroacetaldehyde. May play a role in detoxifying aldehydes present during stationary phase. Cannot use NAD(+) instead of NADP(+) as the electron acceptor. To a lesser extent is also able to oxidize propionaldehyde (propanal), benzaldehyde, mafosfamide, and 4-hydroperoxycyclophosphamide. Does not use either glyceraldehyde or glycolaldehyde as substrates. In Escherichia coli (strain K12), this protein is Aldehyde dehydrogenase B.